We begin with the raw amino-acid sequence, 287 residues long: 4,4'-diapophytoene synthase (287 aa).

(2E,6E)-farnesyl diphosphate contacts are provided by residues 18–21, Tyr-41, and Arg-45; that span reads HSKS. Mg(2+)-binding residues include Asp-48 and Asp-52. Gln-165 contacts (2E,6E)-farnesyl diphosphate. Asn-168 serves as a coordination point for Mg(2+). Residue Arg-171 coordinates (2E,6E)-farnesyl diphosphate. Asp-172 serves as a coordination point for Mg(2+). Tyr-248 is a (2E,6E)-farnesyl diphosphate binding site.

The protein belongs to the phytoene/squalene synthase family. CrtM subfamily. Mg(2+) serves as cofactor.

The enzyme catalyses 2 (2E,6E)-farnesyl diphosphate = 15-cis-4,4'-diapophytoene + 2 diphosphate. Its pathway is carotenoid biosynthesis; staphyloxanthin biosynthesis; staphyloxanthin from farnesyl diphosphate: step 1/5. In terms of biological role, involved in the biosynthesis of the yellow-orange carotenoid staphyloxanthin, which plays a role in the virulence via its protective function against oxidative stress. Catalyzes the head-to-head condensation of two molecules of farnesyl diphosphate (FPP) into the colorless C(30) carotenoid 4,4'-diapophytoene (dehydrosqualene). This chain is 4,4'-diapophytoene synthase, found in Staphylococcus aureus (strain NCTC 8325 / PS 47).